The following is a 164-amino-acid chain: Urocortin-3 (164 aa).

A signal peptide spans 1-23; the sequence is MLMPTYFLLPLLLLLGGPRTSLS. The propeptide occupies 24–121; it reads HKFYNTGPVF…PDKPKSDRGT (98 aa). The segment at 58–120 is disordered; sequence SFGHLPTQDP…YPDKPKSDRG (63 aa). Basic and acidic residues predominate over residues 110-120; sequence LYPDKPKSDRG. Residue Ile-160 is modified to Isoleucine amide.

It belongs to the sauvagine/corticotropin-releasing factor/urotensin I family. In terms of assembly, binds with high affinity to CRF receptors 2-alpha and 2-beta. Expressed in some areas of the brain including the hypothalamus, amygdala, and brainstem, but is not evident in the cerebellum, pituitary, or cerebral cortex; it is also expressed peripherally in small intestine and skin.

The protein resides in the secreted. Suppresses food intake, delays gastric emptying and decreases heat-induced edema. Might represent an endogenous ligand for maintaining homeostasis after stress. In Mus musculus (Mouse), this protein is Urocortin-3 (Ucn3).